The chain runs to 516 residues: Solute carrier family 49 member A3 (516 aa).

Positions 1 to 10 (MAGTMDRLED) are enriched in basic and acidic residues. The tract at residues 1 to 22 (MAGTMDRLEDCNSPETSGTAGD) is disordered. A run of 12 helical transmembrane segments spans residues 34–54 (WVFL…WLSF), 74–94 (WLSL…IWVL), 104–124 (ILGA…CLPV), 139–159 (LCAL…ALWF), 170–190 (ISTM…PALV), 199–219 (MLGI…VCLW), 253–273 (VLLA…SALL), 289–309 (LCGA…GLYV), 321–341 (IGLC…QLQG), 344–364 (LALA…APVV), 382–402 (GLIF…LTAL), and 425–445 (VSLL…VIFF). The tract at residues 453 to 516 (EAESGGSSSP…EWAETMPRDV (64 aa)) is disordered. Residues 504-516 (GHSEWAETMPRDV) are compositionally biased toward basic and acidic residues.

It belongs to the major facilitator superfamily.

It localises to the membrane. In Mus musculus (Mouse), this protein is Solute carrier family 49 member A3 (Slc49a3).